Consider the following 395-residue polypeptide: Bifunctional fatty acid conjugase/Delta(12)-oleate desaturase (395 aa).

2 helical membrane passes run 73 to 93 and 97 to 117; these read FALA…LPKP and MAWP…WVIA. Positions 118-122 match the Histidine box-1 motif; it reads HECGH. Residues 130 to 150 traverse the membrane as a helical segment; that stretch reads WVNDAVGFFLHTSLLVPYFPF. Residues 154-158 carry the Histidine box-2 motif; the sequence is HRRHH. A run of 3 helical transmembrane segments spans residues 192 to 212, 236 to 256, and 264 to 284; these read VLTL…FNAS, FWVH…YRLA, and LLSI…LITF. The Histidine box-3 signature appears at 328-332; it reads HVIHH.

It belongs to the fatty acid desaturase type 1 family.

The protein resides in the membrane. It carries out the reaction a (9Z,12Z)-octadecadienoyl-containing glycerolipid + 2 Fe(II)-[cytochrome b5] + O2 + 2 H(+) = a (9Z,11E,13Z)-octadeca-9,11,13-trienoyl-containing glycerolipid + 2 Fe(III)-[cytochrome b5] + 2 H2O. Its pathway is lipid metabolism; polyunsaturated fatty acid biosynthesis. In terms of biological role, converts a single cis double bond at position 12 of linoleate incorporated into phosphatidylcholine into conjugated 11-trans and 13-cis double bonds. Produces punicic acid (18:3(9Z,11E,13Z)) from linoleic acid and conjugated octadecatetraenoic fatty acid from gamma-linolenic acid. No activity with cis- and trans-vaccenic acid, alpha-linolenic acid or homo-gamma-linolenic acid. 16:2(9Z,12Z), 18:3(9Z,12Z,15Z) and 18:2(9Z,12Z) are substrates for the conjugase to form trans-Delta(11) and cis-Delta(13) double bonds. No activity on the cis-Delta(9) double bonds of oleic and palmitoleic acids. This Punica granatum (Pomegranate) protein is Bifunctional fatty acid conjugase/Delta(12)-oleate desaturase.